Consider the following 188-residue polypeptide: Glutamyl endopeptidase 2 (188 aa).

Cys-14 and Cys-34 are disulfide-bonded. Active-site charge relay system residues include His-33, Asp-62, and Ser-143. The cysteines at positions 137 and 163 are disulfide-linked.

It belongs to the peptidase S1 family. As to quaternary structure, monomer.

It catalyses the reaction Preferential cleavage: -Glu-|-Xaa- &gt;&gt; -Asp-|-Xaa-. Preference for Pro or Leu at P2 and Phe at P3. Cleavage of -Glu-|-Asp- and -Glu-|-Pro- bonds is slow.. In terms of biological role, preferentially cleaves peptide bonds on the carboxyl-terminal side of glutamate. The polypeptide is Glutamyl endopeptidase 2 (sprE) (Streptomyces griseus).